The following is a 185-amino-acid chain: Ribosome-recycling factor (185 aa).

This sequence belongs to the RRF family.

The protein localises to the cytoplasm. Its function is as follows. Responsible for the release of ribosomes from messenger RNA at the termination of protein biosynthesis. May increase the efficiency of translation by recycling ribosomes from one round of translation to another. This Ehrlichia ruminantium (strain Gardel) protein is Ribosome-recycling factor.